Reading from the N-terminus, the 452-residue chain is THO complex subunit 5A (452 aa).

The protein belongs to the THOC5 family. As to quaternary structure, component of the THO complex, which is composed of THO1, THO2, THO3, THO5, THO6 and THO7.

It is found in the nucleus. Functionally, acts as a component of the THO subcomplex of the TREX complex which is thought to couple mRNA transcription, processing and nuclear export. The polypeptide is THO complex subunit 5A (THO5A) (Arabidopsis thaliana (Mouse-ear cress)).